The primary structure comprises 459 residues: Ribulose bisphosphate carboxylase/oxygenase activase, chloroplastic (459 aa).

Residue 164–171 participates in ATP binding; it reads GGKGQGKS.

The protein belongs to the RuBisCO activase family.

It is found in the plastid. Its subcellular location is the chloroplast stroma. In terms of biological role, activation of RuBisCO (ribulose-1,5-bisphosphate carboxylase/oxygenase; EC 4.1.1.39) involves the ATP-dependent carboxylation of the epsilon-amino group of lysine leading to a carbamate structure. This is Ribulose bisphosphate carboxylase/oxygenase activase, chloroplastic from Solanum pennellii (Tomato).